The primary structure comprises 327 residues: MKKTLGIILSISLAFSVLALPIFAAVDTTTSATVEAATPAAPATPAATAPAAAPSVDTSKIAAGTYYTVVSGDFFWQIAAKHGLTIDALAKLNPQIKNVNLIFPGQKILVKAEEAAAASTSTSTAAVAPAAKKLYQGIGMAANYRDNTARQKDHDNLNITTVAALFDDAGKIVKLQFDVVEILPDMFPGWMDPEAADKSFYKDAQANGFNWETKKEEGDAYGMKASAVSGKEWWEQMNFYEEYFKGKTVAEVQDWFAKYCDANGRPYKMAYPEKLTDADKAKVATFTEAEKKMLVDVTTGATMSLQDPHSRFIDALVKAYEVRKEVK.

The N-terminal stretch at 1 to 24 (MKKTLGIILSISLAFSVLALPIFA) is a signal peptide. The LysM domain occupies 65-110 (TYYTVVSGDFFWQIAAKHGLTIDALAKLNPQIKNVNLIFPGQKILV).

Cob(I)alamin serves as cofactor.

Its subcellular location is the secreted. It localises to the cell wall. The protein localises to the cell membrane. Inhibited by sulfide and to a lesser extent by nitrite. In terms of biological role, reductive dechlorination of ortho-chlorophenols. Dechlorinates in the ortho position with respect to the hydroxyl group. This is Chlorophenol reductase from Desulfitobacterium hafniense (Desulfitobacterium frappieri).